The primary structure comprises 350 residues: MFGLKRNAVIGLNLYCGGAGLAAGSGGASSSGGRLVAVGKEATARREVGGGEAGAVIGGSAGASPPATLAPDARRVARPSPIGAEGPDVTATPPKLLFFAATRCASPPEEMEGPAADAIMSPEEELDGYEPEPLGKRPAVLPLLELVGEASSGPGTDGSLPSTPPPAEEEEDELFRQSLEIISRYLREQATGAKDAKPLGGSGAASRKALETLRRVGDGVQRNHETAFQGMLRKLDIKNENDVKSLSRVMVHVFSDGVTNWGRIVTLISFGAFVAKHLKSINQESCIEPLAESITDVLVRTKRDWLVKQRGWDGFVEFFHVEDLEGGIRNVLLAFAGVAGVGAGLAYLIR.

Glycyl lysine isopeptide (Lys-Gly) (interchain with G-Cter in ubiquitin) cross-links involve residues Lys5 and Lys40. Positions 104 to 175 are PEST-like; the sequence is CASPPEEMEG…PAEEEEDELF (72 aa). Ser121 is modified (phosphoserine). Residue Lys136 forms a Glycyl lysine isopeptide (Lys-Gly) (interchain with G-Cter in ubiquitin) linkage. Residues 148–170 are disordered; that stretch reads GEASSGPGTDGSLPSTPPPAEEE. Residue Ser159 is modified to Phosphoserine; by GSK3-alpha and GSK3-beta. Ser162 bears the Phosphoserine mark. Residue Thr163 is modified to Phosphothreonine; by MAPK. Residues Lys194 and Lys197 each participate in a glycyl lysine isopeptide (Lys-Gly) (interchain with G-Cter in ubiquitin) cross-link. The BH3 motif lies at 209 to 223; it reads ALETLRRVGDGVQRN. Positions 252–272 match the BH1 motif; it reads HVFSDGVTNWGRIVTLISFGA. The BH2 signature appears at 304 to 319; that stretch reads DWLVKQRGWDGFVEFF. Residues 328-348 traverse the membrane as a helical segment; sequence IRNVLLAFAGVAGVGAGLAYL.

The protein belongs to the Bcl-2 family. In terms of assembly, interacts with HIF3A (via C-terminus domain). Interacts with BOK, BIK, BAX, BAK1, and TPT1. Interacts with unphosphorylated BAD. Interacts with BMF, BBC3 and PMAIP1. Interacts with BOP. Interacts with BCL2L11; may sequester BCL2L11 to prevent its pro-apoptotic activity. Interacts with GIMAP5 and HSPA8/HSC70; the interaction between HSPA8 and MCL1 is impaired in the absence of GIMAP5. Post-translationally, cleaved by CASP3 during apoptosis, yielding a pro-apoptotic C-terminal fragment. Rapidly degraded in the absence of phosphorylation in the PEST region. In terms of processing, phosphorylated on Ser-159, by GSK3, in response to IL3/interleukin-3 withdrawal. Phosphorylation at Ser-159 induces ubiquitination and proteasomal degradation, abrogating the anti-apoptotic activity. Treatment with taxol or okadaic acid induces phosphorylation on additional sites. Post-translationally, ubiquitinated. Ubiquitination is induced by phosphorylation at Ser-159. Deubiquitinated by USP20; leading to increased stability.

The protein resides in the membrane. It is found in the cytoplasm. It localises to the mitochondrion. Its subcellular location is the nucleus. The protein localises to the nucleoplasm. In terms of biological role, involved in the regulation of apoptosis versus cell survival, and in the maintenance of viability but not of proliferation. Mediates its effects by interactions with a number of other regulators of apoptosis. In Felis catus (Cat), this protein is Induced myeloid leukemia cell differentiation protein Mcl-1 homolog (MCL1).